The following is a 428-amino-acid chain: Adenylosuccinate synthetase (428 aa).

Residues 12-18 (GDEGKGK) and 40-42 (GHT) each bind GTP. Catalysis depends on aspartate 13, which acts as the Proton acceptor. Mg(2+) is bound by residues aspartate 13 and glycine 40. Residues 13-16 (DEGK), 38-41 (NAGH), threonine 130, arginine 144, glutamine 225, threonine 240, and arginine 304 contribute to the IMP site. Histidine 41 functions as the Proton donor in the catalytic mechanism. 300–306 (ATTGRPR) contributes to the substrate binding site. GTP is bound by residues arginine 306, 332 to 334 (KLD), and 415 to 417 (SVG).

Belongs to the adenylosuccinate synthetase family. In terms of assembly, homodimer. Requires Mg(2+) as cofactor.

Its subcellular location is the cytoplasm. It catalyses the reaction IMP + L-aspartate + GTP = N(6)-(1,2-dicarboxyethyl)-AMP + GDP + phosphate + 2 H(+). It functions in the pathway purine metabolism; AMP biosynthesis via de novo pathway; AMP from IMP: step 1/2. Plays an important role in the de novo pathway of purine nucleotide biosynthesis. Catalyzes the first committed step in the biosynthesis of AMP from IMP. The chain is Adenylosuccinate synthetase from Lawsonia intracellularis (strain PHE/MN1-00).